A 209-amino-acid polypeptide reads, in one-letter code: Probable glutathione peroxidase 8-B (209 aa).

A helical membrane pass occupies residues V18 to L40. The active site involves C79.

Belongs to the glutathione peroxidase family.

The protein localises to the membrane. The enzyme catalyses 2 glutathione + H2O2 = glutathione disulfide + 2 H2O. The chain is Probable glutathione peroxidase 8-B (gpx8-b) from Xenopus laevis (African clawed frog).